The chain runs to 200 residues: MARYTGPAWKLSRRLGISLSGTGKELEKRPYAPGPHGPNQRKKLSEYGLQLQEKQKLRHMYGMTERQFRRTFDQAGKMPGKHGENFMILLEARLDNLVYRMGLARTRRAARQLVNHGHIMVDGARVDIPSYRVKPGQTISVREKSNSLVVVKEAIEVNNFVPEYLTFDADKLEATYTRHAERSELPAEINEALIVEFYSR.

A disordered region spans residues Thr-22 to Lys-42. In terms of domain architecture, S4 RNA-binding spans Ala-92–Lys-152.

Belongs to the universal ribosomal protein uS4 family. In terms of assembly, part of the 30S ribosomal subunit. Contacts protein S5. The interaction surface between S4 and S5 is involved in control of translational fidelity.

Functionally, one of the primary rRNA binding proteins, it binds directly to 16S rRNA where it nucleates assembly of the body of the 30S subunit. With S5 and S12 plays an important role in translational accuracy. This Bacillus cereus (strain B4264) protein is Small ribosomal subunit protein uS4.